Consider the following 431-residue polypeptide: Glutamate-1-semialdehyde 2,1-aminomutase (431 aa).

Lysine 269 carries the N6-(pyridoxal phosphate)lysine modification.

Belongs to the class-III pyridoxal-phosphate-dependent aminotransferase family. HemL subfamily. Homodimer. It depends on pyridoxal 5'-phosphate as a cofactor.

The protein resides in the cytoplasm. It catalyses the reaction (S)-4-amino-5-oxopentanoate = 5-aminolevulinate. The protein operates within porphyrin-containing compound metabolism; protoporphyrin-IX biosynthesis; 5-aminolevulinate from L-glutamyl-tRNA(Glu): step 2/2. It functions in the pathway porphyrin-containing compound metabolism; chlorophyll biosynthesis. In Chlorobium phaeovibrioides (strain DSM 265 / 1930) (Prosthecochloris vibrioformis (strain DSM 265)), this protein is Glutamate-1-semialdehyde 2,1-aminomutase.